Consider the following 208-residue polypeptide: Putative archaetidylserine decarboxylase proenzyme (208 aa).

The active-site Schiff-base intermediate with substrate; via pyruvic acid is Ser171. Pyruvic acid (Ser); by autocatalysis is present on Ser171.

Belongs to the phosphatidylserine decarboxylase family. PSD-A subfamily. As to quaternary structure, heterodimer of a large membrane-associated beta subunit and a small pyruvoyl-containing alpha subunit. It depends on pyruvate as a cofactor. Is synthesized initially as an inactive proenzyme. Formation of the active enzyme involves a self-maturation process in which the active site pyruvoyl group is generated from an internal serine residue via an autocatalytic post-translational modification. Two non-identical subunits are generated from the proenzyme in this reaction, and the pyruvate is formed at the N-terminus of the alpha chain, which is derived from the carboxyl end of the proenzyme. The post-translation cleavage follows an unusual pathway, termed non-hydrolytic serinolysis, in which the side chain hydroxyl group of the serine supplies its oxygen atom to form the C-terminus of the beta chain, while the remainder of the serine residue undergoes an oxidative deamination to produce ammonia and the pyruvoyl prosthetic group on the alpha chain.

Its subcellular location is the cell membrane. It carries out the reaction archaetidylserine + H(+) = archaetidylethanolamine + CO2. Catalyzes the formation of archaetidylethanolamine (PtdEtn) from archaetidylserine (PtdSer). The polypeptide is Putative archaetidylserine decarboxylase proenzyme (Methanococcoides burtonii (strain DSM 6242 / NBRC 107633 / OCM 468 / ACE-M)).